Consider the following 225-residue polypeptide: Phosphatidylserine decarboxylase proenzyme (225 aa).

The active-site Schiff-base intermediate with substrate; via pyruvic acid is the S188. Residue S188 is modified to Pyruvic acid (Ser); by autocatalysis.

This sequence belongs to the phosphatidylserine decarboxylase family. PSD-A subfamily. As to quaternary structure, heterodimer of a large membrane-associated beta subunit and a small pyruvoyl-containing alpha subunit. Pyruvate serves as cofactor. Post-translationally, is synthesized initially as an inactive proenzyme. Formation of the active enzyme involves a self-maturation process in which the active site pyruvoyl group is generated from an internal serine residue via an autocatalytic post-translational modification. Two non-identical subunits are generated from the proenzyme in this reaction, and the pyruvate is formed at the N-terminus of the alpha chain, which is derived from the carboxyl end of the proenzyme. The post-translation cleavage follows an unusual pathway, termed non-hydrolytic serinolysis, in which the side chain hydroxyl group of the serine supplies its oxygen atom to form the C-terminus of the beta chain, while the remainder of the serine residue undergoes an oxidative deamination to produce ammonia and the pyruvoyl prosthetic group on the alpha chain.

The protein resides in the cell membrane. It catalyses the reaction a 1,2-diacyl-sn-glycero-3-phospho-L-serine + H(+) = a 1,2-diacyl-sn-glycero-3-phosphoethanolamine + CO2. The protein operates within phospholipid metabolism; phosphatidylethanolamine biosynthesis; phosphatidylethanolamine from CDP-diacylglycerol: step 2/2. Catalyzes the formation of phosphatidylethanolamine (PtdEtn) from phosphatidylserine (PtdSer). This Parvibaculum lavamentivorans (strain DS-1 / DSM 13023 / NCIMB 13966) protein is Phosphatidylserine decarboxylase proenzyme.